A 357-amino-acid chain; its full sequence is 3-dehydroquinate synthase (357 aa).

NAD(+) contacts are provided by residues 104 to 108 (GVVGD), 128 to 129 (TT), Lys-141, and 168 to 171 (FLET). Zn(2+) is bound by residues Glu-183, His-243, and His-260.

This sequence belongs to the sugar phosphate cyclases superfamily. Dehydroquinate synthase family. NAD(+) is required as a cofactor. Co(2+) serves as cofactor. It depends on Zn(2+) as a cofactor.

Its subcellular location is the cytoplasm. The catalysed reaction is 7-phospho-2-dehydro-3-deoxy-D-arabino-heptonate = 3-dehydroquinate + phosphate. Its pathway is metabolic intermediate biosynthesis; chorismate biosynthesis; chorismate from D-erythrose 4-phosphate and phosphoenolpyruvate: step 2/7. Catalyzes the conversion of 3-deoxy-D-arabino-heptulosonate 7-phosphate (DAHP) to dehydroquinate (DHQ). The sequence is that of 3-dehydroquinate synthase from Streptococcus pyogenes serotype M3 (strain ATCC BAA-595 / MGAS315).